Here is a 150-residue protein sequence, read N- to C-terminus: Protein-export protein SecB (150 aa).

This sequence belongs to the SecB family. In terms of assembly, homotetramer, a dimer of dimers. One homotetramer interacts with 1 SecA dimer.

The protein localises to the cytoplasm. Its function is as follows. One of the proteins required for the normal export of preproteins out of the cell cytoplasm. It is a molecular chaperone that binds to a subset of precursor proteins, maintaining them in a translocation-competent state. It also specifically binds to its receptor SecA. The chain is Protein-export protein SecB from Polaromonas sp. (strain JS666 / ATCC BAA-500).